A 196-amino-acid chain; its full sequence is Oocyte zinc finger protein XlCOF26 (196 aa).

7 consecutive C2H2-type zinc fingers follow at residues 6 to 28 (YSCT…QKNH), 34 to 56 (FTCT…QRIH), 62 to 84 (FTCT…QRIH), 90 to 112 (FTCT…HKIH), 118 to 140 (FTCP…QRTH), 146 to 168 (FTCT…QSTH), and 174 to 196 (FTCT…QMTH).

Belongs to the krueppel C2H2-type zinc-finger protein family.

The protein resides in the nucleus. May be involved in transcriptional regulation. The sequence is that of Oocyte zinc finger protein XlCOF26 from Xenopus laevis (African clawed frog).